A 60-amino-acid polypeptide reads, in one-letter code: Large ribosomal subunit protein bL32 (60 aa).

Over residues 1-23 the composition is skewed to basic residues; sequence MACPKKKTSNAKRDQRRAHWRKQ. The tract at residues 1-60 is disordered; it reads MACPKKKTSNAKRDQRRAHWRKQAAREAQKALSLGKSVLSGRSNSFVYPTKEEEEGEDEE.

It belongs to the bacterial ribosomal protein bL32 family.

The sequence is that of Large ribosomal subunit protein bL32 from Microcystis aeruginosa (strain NIES-843 / IAM M-2473).